The chain runs to 66 residues: Gallinacin-8 (66 aa).

Positions 1–19 (MKILYLLLAVLLTVLQSSL) are cleaved as a signal peptide. A propeptide spanning residues 20-25 (GFMRVP) is cleaved from the precursor. Intrachain disulfides connect cysteine 31–cysteine 60, cysteine 38–cysteine 54, and cysteine 43–cysteine 61.

The protein belongs to the beta-defensin family. Expressed in the liver, kidney, gall bladder, testis, ovary and male and femae reproductive tracts. Expressed in the ovarian stroma and the theca and granulosa layers of the ovarian follicle.

Its subcellular location is the secreted. The protein localises to the cytoplasmic granule. Functionally, has bactericidal activity. The chain is Gallinacin-8 (GAL8) from Gallus gallus (Chicken).